Here is a 187-residue protein sequence, read N- to C-terminus: Transcription antitermination protein NusB (187 aa).

Residues 135-187 are disordered; it reads APAPESVAEEADEESSDSDAAASDPTDEGDVSDSSGASDEPAAPSAEIQPTVD. A compositionally biased stretch (acidic residues) spans 141-151; the sequence is VAEEADEESSD.

This sequence belongs to the NusB family.

In terms of biological role, involved in transcription antitermination. Required for transcription of ribosomal RNA (rRNA) genes. Binds specifically to the boxA antiterminator sequence of the ribosomal RNA (rrn) operons. In Bifidobacterium longum subsp. infantis (strain ATCC 15697 / DSM 20088 / JCM 1222 / NCTC 11817 / S12), this protein is Transcription antitermination protein NusB.